Reading from the N-terminus, the 194-residue chain is Large ribosomal subunit protein bL9 (194 aa).

The protein belongs to the bacterial ribosomal protein bL9 family.

Binds to the 23S rRNA. The chain is Large ribosomal subunit protein bL9 from Paracoccus denitrificans (strain Pd 1222).